Here is a 167-residue protein sequence, read N- to C-terminus: S-ribosylhomocysteine lyase (167 aa).

Residues His-54, His-58, and Cys-128 each contribute to the Fe cation site.

Belongs to the LuxS family. As to quaternary structure, homodimer. Fe cation serves as cofactor.

The enzyme catalyses S-(5-deoxy-D-ribos-5-yl)-L-homocysteine = (S)-4,5-dihydroxypentane-2,3-dione + L-homocysteine. Involved in the synthesis of autoinducer 2 (AI-2) which is secreted by bacteria and is used to communicate both the cell density and the metabolic potential of the environment. The regulation of gene expression in response to changes in cell density is called quorum sensing. Catalyzes the transformation of S-ribosylhomocysteine (RHC) to homocysteine (HC) and 4,5-dihydroxy-2,3-pentadione (DPD). The sequence is that of S-ribosylhomocysteine lyase from Haemophilus influenzae (strain 86-028NP).